The sequence spans 196 residues: ATP-dependent Clp protease proteolytic subunit (196 aa).

The active-site Nucleophile is the serine 101. Residue histidine 126 is part of the active site.

This sequence belongs to the peptidase S14 family. As to quaternary structure, component of the chloroplastic Clp protease core complex.

Its subcellular location is the plastid. It localises to the chloroplast stroma. The enzyme catalyses Hydrolysis of proteins to small peptides in the presence of ATP and magnesium. alpha-casein is the usual test substrate. In the absence of ATP, only oligopeptides shorter than five residues are hydrolyzed (such as succinyl-Leu-Tyr-|-NHMec, and Leu-Tyr-Leu-|-Tyr-Trp, in which cleavage of the -Tyr-|-Leu- and -Tyr-|-Trp bonds also occurs).. In terms of biological role, cleaves peptides in various proteins in a process that requires ATP hydrolysis. Has a chymotrypsin-like activity. Plays a major role in the degradation of misfolded proteins. In Populus trichocarpa (Western balsam poplar), this protein is ATP-dependent Clp protease proteolytic subunit.